The chain runs to 125 residues: Phosphoribosyl-AMP cyclohydrolase (125 aa).

Mg(2+) is bound at residue Asp-74. Zn(2+) is bound at residue Cys-75. Residues Asp-76 and Asp-78 each contribute to the Mg(2+) site. Zn(2+) contacts are provided by Cys-92 and Cys-99.

This sequence belongs to the PRA-CH family. As to quaternary structure, homodimer. The cofactor is Mg(2+). Zn(2+) is required as a cofactor.

The protein localises to the cytoplasm. It carries out the reaction 1-(5-phospho-beta-D-ribosyl)-5'-AMP + H2O = 1-(5-phospho-beta-D-ribosyl)-5-[(5-phospho-beta-D-ribosylamino)methylideneamino]imidazole-4-carboxamide. Its pathway is amino-acid biosynthesis; L-histidine biosynthesis; L-histidine from 5-phospho-alpha-D-ribose 1-diphosphate: step 3/9. Functionally, catalyzes the hydrolysis of the adenine ring of phosphoribosyl-AMP. In Geobacter sulfurreducens (strain ATCC 51573 / DSM 12127 / PCA), this protein is Phosphoribosyl-AMP cyclohydrolase.